The sequence spans 226 residues: Ribonuclease 3 (226 aa).

One can recognise an RNase III domain in the interval Ile-6–Asp-128. Glu-41 is a binding site for Mg(2+). Asp-45 is a catalytic residue. 2 residues coordinate Mg(2+): Asp-114 and Glu-117. Glu-117 is an active-site residue. The DRBM domain occupies Asp-155–Leu-225.

The protein belongs to the ribonuclease III family. As to quaternary structure, homodimer. Mg(2+) serves as cofactor.

It is found in the cytoplasm. It carries out the reaction Endonucleolytic cleavage to 5'-phosphomonoester.. Functionally, digests double-stranded RNA. Involved in the processing of primary rRNA transcript to yield the immediate precursors to the large and small rRNAs (23S and 16S). Processes some mRNAs, and tRNAs when they are encoded in the rRNA operon. Processes pre-crRNA and tracrRNA of type II CRISPR loci if present in the organism. In Pantoea ananatis (strain LMG 20103), this protein is Ribonuclease 3 (rnc).